Reading from the N-terminus, the 154-residue chain is Protein E6 (154 aa).

2 zinc fingers span residues Cys-34–Cys-70 and Cys-107–Cys-143.

It belongs to the papillomaviridae E6 protein family. Forms homodimers. Interacts with ubiquitin-protein ligase UBE3A/E6-AP; this interaction stimulates UBE3A ubiquitin activity. Interacts with host TP53 and EP300; this interaction inhibits TP53 activity.

The protein localises to the host cytoplasm. It is found in the host nucleus. Its function is as follows. Plays a major role in the induction and maintenance of cellular transformation. E6 associates with host UBE3A/E6-AP ubiquitin-protein ligase and modulates its activity. Sequesters tumor suppressor TP53 in the host cytoplasm and modulates its activity by interacting with host EP300 that results in the reduction of TP53 acetylation and activation. In turn, apoptosis induced by DNA damage is inhibited. E6 also protects host keratinocytes from apoptosis by mediating the degradation of host BAK1. May also inhibit host immune response. This Human papillomavirus type 53 protein is Protein E6.